The chain runs to 283 residues: 4-diphosphocytidyl-2-C-methyl-D-erythritol kinase (283 aa).

Residue Lys-10 is part of the active site. 99–109 (PMGGGLGGGSS) is a binding site for ATP. Residue Asp-141 is part of the active site.

The protein belongs to the GHMP kinase family. IspE subfamily. Homodimer.

The enzyme catalyses 4-CDP-2-C-methyl-D-erythritol + ATP = 4-CDP-2-C-methyl-D-erythritol 2-phosphate + ADP + H(+). It participates in isoprenoid biosynthesis; isopentenyl diphosphate biosynthesis via DXP pathway; isopentenyl diphosphate from 1-deoxy-D-xylulose 5-phosphate: step 3/6. Functionally, catalyzes the phosphorylation of the position 2 hydroxy group of 4-diphosphocytidyl-2C-methyl-D-erythritol. This Salmonella paratyphi C (strain RKS4594) protein is 4-diphosphocytidyl-2-C-methyl-D-erythritol kinase.